We begin with the raw amino-acid sequence, 299 residues long: MLPDIQSTKGDGEGESLSWVGMEQIDLPIDIAGRPVSAKVNAGINLLSSPEAEKGIHMSRLYLLLDELTQGEITPALLQHVLKAFLVSHQGRSDEASIEISGDLLLSRKSLNSNHSGWKAYPLTLSAELRQSFTVTLKVGIPYSSTCPASAALSRHVAGLQFSKDFGNRIDRLPAAEIADWLVEKGMPATPHSQRSWAWVDIRLNPEAKSLPVLELIDYAEVALGTAVQTVVKRSDEQAFAVANGQNLMFCEDAARRLNNVFRCASFCEAFDIRVEHQESLHPHNAVARIHWKGSKNVT.

Belongs to the GTP cyclohydrolase IV family.

It carries out the reaction GTP + H2O = 7,8-dihydroneopterin 3'-triphosphate + formate + H(+). It functions in the pathway cofactor biosynthesis; 7,8-dihydroneopterin triphosphate biosynthesis; 7,8-dihydroneopterin triphosphate from GTP: step 1/1. In terms of biological role, converts GTP to 7,8-dihydroneopterin triphosphate. The chain is GTP cyclohydrolase FolE2 from Klebsiella pneumoniae.